The primary structure comprises 164 residues: Interferon gamma (164 aa).

A signal peptide spans 1–19 (MTCQTYNLFVLSVIMIYYG). N-linked (GlcNAc...) asparagine glycosylation is found at Asn42 and Asn61.

The protein belongs to the type II (or gamma) interferon family. Homodimer.

The protein resides in the secreted. Functionally, produced by lymphocytes activated by specific antigens or mitogens. IFN-gamma, in addition to having antiviral activity, has important immunoregulatory functions. It is a potent activator of macrophages, it has antiproliferative effects on transformed cells and it can potentiate the antiviral and antitumor effects of the type I interferons. This Meleagris gallopavo (Wild turkey) protein is Interferon gamma (IFNG).